The primary structure comprises 2267 residues: MEGSYQMNGILNGMSNSRHPSSPSEVDEFCKALGGDSPIHSVLVANNGMAAVKFMRSIRTWALETFGTEKAILLVAMATPEDLKINAEHIRIADQFVEVPGGTNNNNYANVQLIVEIAERTHVSAVWPGWGHASENPELPDALKEKGIIFLGPPSAAMAALGDKIGSSLIAQAAGVPTLPWSGSHVKIPPESCNSIPEEMYRSACVSTTEEAVASCQVVGYPAMIKASWGGGGKGIRKVHNDDEVRALFKQVQGEVPGSPIFIMKVASQSRHLEVQLLCDKHGNVAALHSRDCSVQRRHQKIIEEGPITVAPSETVKELEQAARRLAKCVHYVGAATVEYLYSMETGEYYFLELNPRLQVEHPVTEWIAEINLPAAQVVVGMGVPLYNIPEIRRFYGMEHGGGYDAWRKISAVATKFDLDNAQSVKPKGHCVAVRVTSEDPDDGFKPTSGRVEELNFKSKPNVWAYFSVKSGGAIHEFSDSQFGHVFAFGESRSLAIANMVLGLKEIQIRGEIRTNVDYTVDLLNAAEYRENKIHTGWLDSRIAMRVRAERPPWYLSVVGGALYEASSRSSSVVTDYVGYLSKGQIPPKHISLVNLTVTLNIEGSKYTIETVRRGPRSYTLRMNGSEIEAEIHSLRDGGLLMQLDGNSHVIYAETEAAGTRLLINGRTCLLQKEHDPSKLLADTPCKLLRFLVADGSHVDADTPYAEVEVMKMCMPLLLPASGVIHFVMPEGQAMQAADLIARLDLDDPSSVRRAEPFHGTFPKLGPPTAVSGKVHQKFAASVNSAHMILAGYEHNINEVVQDLLNCLDSPELPFLQWQELMSVLATRLPKDLRNELDGKYKEYELNSDFRKNKDFPAKLLRGIIEANLAYCSEKDRVTNERLVEPLMSLVKSYEGGRESHARVVVKSLFEEYLSVEELFSDNIQSDVIERLRLQHAKDLEKVVYIVFSHQGVRTKNKLILRLMEALVYPNPSAYRDQLIRFSGLNNTVYSELALKASQLLEHTKLSELRTSIARSLSELEMFTEEGERVSTPRRKMAINERMEDLVGAPLAVEDALVALFDHSDPTLQRRVVETYIRRLYQPYLVKGSVRMQWHRSGLIALWEFSEEHIKQRNGQDAMSLKQQVEDPEEKRWGVMVVIKSLQYLSSAIDAALKETSHYKAGAGNVSNGNSASSSHGNMLHIALVGINNQMSTLQDSGDEDQAQERINKISKILKDSTVTSHLNGAGVRVVSCIIQRDEGRPPMRHSFQWSVDKIYYEEDPMLRHVEPPLSTFLELNKVNLDGYNEVKYTPSRDRQWHIYTLIKNKKDQRSNDQRLFLRTIVRQPGVTNGFLSGNVDNEVGRAQASSSYTSSSILRSLMAALEEIELHAHNETVRSSYSHMYLCILRVQQLFDLIPFSRTIDNVGQDEATACTLLKNMALNIYEHVGVRMHRLSVCQWEVKLWLDCDGQASGAWRVVVTNVTGHTCTVDIYREVEDSNTHKLFYHSVTPSLGPLHGIVLDEPYKPLDAIDLKRYSARKNETTYCYDFPLAFETALKRSWKSTLSVVAEANEHNKSYAKVTELMFADSTGSWGTPLVPVERSPGINDIGIVAWIMKLSTPEFPSGREIIVVSNDVTFKAGSFGPREDAFFDAVTNLACERKLPLIYLSATAGARLGVAEEIKACFNVGWSDDESPERGFHYIYLTEQDYSRLSSSVIAHELKLESGETRWVVDTIVGKEDGLGCENLHGSGAIASAYSKAYKETFTLTFVTGRAVGIGAYLARLGMRCIQRLDQPIILTGFSALNKLLGREVYSSHMQLGGPKIMATNGVVHLTVSDDLEGVSAILKWLSYVPPYVGGPLPIMKPLDPPDRPVTYFPENSCDARAAICGVQDSQGKWMGGMFDRESFVETLEGWAKTVVTGRAKLGGIPVGVIAVETQTMMQVIPADPGQLDSAERVVPQAGQVWFPDSATKTAQALLDFNREELPLFILANWRGFSGGQRDLFEGILQAGSNIVENLRTYNQPAFVYIPMGGELRGGAWVVVDSKINPEHIEMYAERTAKGNVLEPEGLVEIKFRPKELEECMLRLDPELIKLSTRLREMKKENAGLSEMDTTRRSIIARMKQLMPIYTQVATRFAELHDTSARMAAKGVIGKVVDWEESRSFFYRRLRRRVTEDALAKEIREAAGEQLSQKSALDYIKKWYLSSNGSDGNSEKWNNDEAFFAWKDDPTNYENQLEELKAERVSKWLSRLAESPDVKALPNGLSIVLNKMNPSKREQVIDGLRQLLG.

The region spanning 38–544 (PIHSVLVANN…HTGWLDSRIA (507 aa)) is the Biotin carboxylation domain. Residues 190 to 384 (PESCNSIPEE…AAQVVVGMGV (195 aa)) enclose the ATP-grasp domain. 216 to 273 (CQVVGYPAMIKASWGGGGKGIRKVHNDDEVRALFKQVQGEVPGSPIFIMKVASQSRHL) is an ATP binding site. Mg(2+) contacts are provided by E339, E353, and N355. 3 residues coordinate Mn(2+): E339, E353, and N355. The active site involves R357. The region spanning 671–745 (LQKEHDPSKL…QAADLIARLD (75 aa)) is the Biotinyl-binding domain. N6-biotinyllysine is present on K712. A CoA carboxyltransferase N-terminal domain is found at 1502–1843 (PYKPLDAIDL…YVGGPLPIMK (342 aa)). Residues 1502-2163 (PYKPLDAIDL…EDALAKEIRE (662 aa)) are carboxyltransferase. CoA-binding residues include R1752, K2053, and R2055. The region spanning 1847–2163 (PPDRPVTYFP…EDALAKEIRE (317 aa)) is the CoA carboxyltransferase C-terminal domain.

Homodimer. Requires Mg(2+) as cofactor. The cofactor is Mn(2+). Biotin serves as cofactor.

Its subcellular location is the cytoplasm. The protein localises to the cytosol. It carries out the reaction hydrogencarbonate + acetyl-CoA + ATP = malonyl-CoA + ADP + phosphate + H(+). The catalysed reaction is N(6)-biotinyl-L-lysyl-[protein] + hydrogencarbonate + ATP = N(6)-carboxybiotinyl-L-lysyl-[protein] + ADP + phosphate + H(+). Its pathway is lipid metabolism; malonyl-CoA biosynthesis; malonyl-CoA from acetyl-CoA: step 1/1. Its function is as follows. Multifunctional enzyme that catalyzes the carboxylation of acetyl-CoA, forming malonyl-CoA, which is used in the plastid for fatty acid synthesis and in the cytosol in various biosynthetic pathways including fatty acid elongation. This is Acetyl-CoA carboxylase 1 (ACC1) from Oryza sativa subsp. japonica (Rice).